A 72-amino-acid polypeptide reads, in one-letter code: KRALQSEKRRQHNASRRSMTRTYLKKVIAAIASGDKAAATAAFAVAQPIMDRMATKGLIHKNKAARHKSRLS.

It belongs to the bacterial ribosomal protein bS20 family.

Binds directly to 16S ribosomal RNA. The sequence is that of Small ribosomal subunit protein bS20 (rpsT) from Aeromonas hydrophila.